The sequence spans 443 residues: Probable D-serine dehydratase (443 aa).

The residue at position 106 (Lys-106) is an N6-(pyridoxal phosphate)lysine.

The protein belongs to the serine/threonine dehydratase family. DsdA subfamily. The cofactor is pyridoxal 5'-phosphate.

The enzyme catalyses D-serine = pyruvate + NH4(+). The protein is Probable D-serine dehydratase of Cupriavidus pinatubonensis (strain JMP 134 / LMG 1197) (Cupriavidus necator (strain JMP 134)).